The following is a 110-amino-acid chain: NADH-quinone oxidoreductase subunit K (110 aa).

3 helical membrane passes run 13–33 (LNHY…GLFM), 41–61 (ILMS…AFSI), and 73–93 (IIIL…LLIY).

Belongs to the complex I subunit 4L family. In terms of assembly, NDH-1 is composed of 14 different subunits. Subunits NuoA, H, J, K, L, M, N constitute the membrane sector of the complex.

Its subcellular location is the cell inner membrane. The catalysed reaction is a quinone + NADH + 5 H(+)(in) = a quinol + NAD(+) + 4 H(+)(out). Functionally, NDH-1 shuttles electrons from NADH, via FMN and iron-sulfur (Fe-S) centers, to quinones in the respiratory chain. The immediate electron acceptor for the enzyme in this species is believed to be ubiquinone. Couples the redox reaction to proton translocation (for every two electrons transferred, four hydrogen ions are translocated across the cytoplasmic membrane), and thus conserves the redox energy in a proton gradient. This chain is NADH-quinone oxidoreductase subunit K, found in Rickettsia felis (strain ATCC VR-1525 / URRWXCal2) (Rickettsia azadi).